We begin with the raw amino-acid sequence, 66 residues long: MLELRAKQIRQMSKEERQQTLKNLKESLLHERALVSMGGSSPSPGKVRSIRRQIARLLTVEREEKK.

Belongs to the universal ribosomal protein uL29 family.

The chain is Large ribosomal subunit protein uL29 from Thermoplasma volcanium (strain ATCC 51530 / DSM 4299 / JCM 9571 / NBRC 15438 / GSS1).